A 122-amino-acid polypeptide reads, in one-letter code: Large ribosomal subunit protein uL14 (122 aa).

This sequence belongs to the universal ribosomal protein uL14 family. Part of the 50S ribosomal subunit. Forms a cluster with proteins L3 and L19. In the 70S ribosome, L14 and L19 interact and together make contacts with the 16S rRNA in bridges B5 and B8.

Binds to 23S rRNA. Forms part of two intersubunit bridges in the 70S ribosome. The polypeptide is Large ribosomal subunit protein uL14 (Streptococcus agalactiae serotype Ia (strain ATCC 27591 / A909 / CDC SS700)).